A 540-amino-acid chain; its full sequence is Peptide chain release factor 3 (540 aa).

The 270-residue stretch at 14-283 (NQRRNFAIIS…AFLDYALKPI (270 aa)) folds into the tr-type G domain. GTP contacts are provided by residues 23-30 (SHPDAGKT), 91-95 (DTPGH), and 145-148 (NKLD).

The protein belongs to the TRAFAC class translation factor GTPase superfamily. Classic translation factor GTPase family. PrfC subfamily.

It is found in the cytoplasm. In terms of biological role, increases the formation of ribosomal termination complexes and stimulates activities of RF-1 and RF-2. It binds guanine nucleotides and has strong preference for UGA stop codons. It may interact directly with the ribosome. The stimulation of RF-1 and RF-2 is significantly reduced by GTP and GDP, but not by GMP. The chain is Peptide chain release factor 3 from Gloeothece citriformis (strain PCC 7424) (Cyanothece sp. (strain PCC 7424)).